The primary structure comprises 362 residues: Dihydroorotate dehydrogenase (quinone) (362 aa).

FMN contacts are provided by residues 62–66 (AGYDK) and Thr-86. Lys-66 serves as a coordination point for substrate. Position 111–115 (111–115 (NRLGF)) interacts with substrate. Residues Asn-139 and Asn-170 each coordinate FMN. Position 170 (Asn-170) interacts with substrate. Ser-173 (nucleophile) is an active-site residue. Asn-175 provides a ligand contact to substrate. FMN is bound by residues Lys-215 and Ser-243. Residue 244 to 245 (NT) participates in substrate binding. FMN-binding positions include Gly-266, Gly-295, and 316 to 317 (YS).

Belongs to the dihydroorotate dehydrogenase family. Type 2 subfamily. Monomer. The cofactor is FMN.

It localises to the cell membrane. It carries out the reaction (S)-dihydroorotate + a quinone = orotate + a quinol. The protein operates within pyrimidine metabolism; UMP biosynthesis via de novo pathway; orotate from (S)-dihydroorotate (quinone route): step 1/1. Catalyzes the conversion of dihydroorotate to orotate with quinone as electron acceptor. The chain is Dihydroorotate dehydrogenase (quinone) from Sinorhizobium medicae (strain WSM419) (Ensifer medicae).